The primary structure comprises 401 residues: uncharacterized protein (401 aa).

The next 10 membrane-spanning stretches (helical) occupy residues 20–40 (FFGE…MVLY), 49–69 (IMMP…LTLA), 83–100 (ILTA…FVFA), 104–121 (YVFA…SLYI), 140–160 (VFAV…LVGM), 167–187 (PVWI…IAAL), 207–227 (FTIY…SMLY), 248–268 (MLTI…VPLV), 289–309 (LAAA…TAAV), and 357–377 (GLIL…VCLL).

Belongs to the major facilitator superfamily.

Its subcellular location is the cell membrane. This is an uncharacterized protein from Bacillus subtilis (strain 168).